The sequence spans 1944 residues: Anaphase-promoting complex subunit 1 (1944 aa).

Residues S51 and S60 each carry the phosphoserine modification. A Phosphothreonine modification is found at T291. The segment at 312 to 343 is disordered; the sequence is ESPVASPFQNYSSIHSQSRSTSSPSLHSRSPS. Phosphoserine occurs at positions 313, 341, 343, 355, 362, 373, and 377. The span at 323-343 shows a compositional bias: low complexity; that stretch reads SSIHSQSRSTSSPSLHSRSPS. Positions 370–395 are disordered; that stretch reads NLSSHSQSPKRHSISHSPSGSFNDSF. Residues 384–393 show a composition bias toward polar residues; sequence SHSPSGSFND. T537 carries the phosphothreonine modification. A phosphoserine mark is found at S547 and S555. Position 571 is a phosphotyrosine (Y571). S680, S686, and S688 each carry phosphoserine. The disordered stretch occupies residues 991–1014; sequence NLPRGKSVLSSEVSSGTEAEEEDD. A compositionally biased stretch (polar residues) spans 998-1007; sequence VLSSEVSSGT. PC repeat units follow at residues 1297 to 1325, 1366 to 1404, 1467 to 1501, and 1520 to 1552; these read AAGLALGMVCLGHGSNLIGMSDLNVPEQL, GATLALAMIYLKTNNRSIADWLRAPDTMYLLDFVKPEFL, GACLSLGFRFAGSENLSAFSCLHKFAKDFMNYLSA, and LLSLAMVMAGSGNLKVLQLCRFLHMKTGGEMNY.

It belongs to the APC1 family. In terms of assembly, the mammalian APC/C is composed at least of 14 distinct subunits ANAPC1, ANAPC2, CDC27/APC3, ANAPC4, ANAPC5, CDC16/APC6, ANAPC7, CDC23/APC8, ANAPC10, ANAPC11, CDC26/APC12, ANAPC13, ANAPC15 and ANAPC16 that assemble into a complex of at least 19 chains with a combined molecular mass of around 1.2 MDa; APC/C interacts with FZR1 and FBXO5. Post-translationally, phosphorylated. Phosphorylation on Ser-355 occurs specifically during mitosis. As to expression, abundantly expressed in proliferating fibroblasts, juvenile testis, adult brain and epididymis.

It functions in the pathway protein modification; protein ubiquitination. Functionally, component of the anaphase promoting complex/cyclosome (APC/C), a cell cycle-regulated E3 ubiquitin ligase that controls progression through mitosis and the G1 phase of the cell cycle. The APC/C complex acts by mediating ubiquitination and subsequent degradation of target proteins: it mainly mediates the formation of 'Lys-11'-linked polyubiquitin chains and, to a lower extent, the formation of 'Lys-48'- and 'Lys-63'-linked polyubiquitin chains. The APC/C complex catalyzes assembly of branched 'Lys-11'-/'Lys-48'-linked branched ubiquitin chains on target proteins. The sequence is that of Anaphase-promoting complex subunit 1 (Anapc1) from Mus musculus (Mouse).